Consider the following 299-residue polypeptide: Acarbose 7(IV)-phosphotransferase (299 aa).

It belongs to the carbohydrate kinase PfkB family.

It carries out the reaction acarbose + ATP = acarbose 7(IV)-phosphate + ADP + H(+). In terms of biological role, catalyzes the phosphorylation of the alpha-glucosidase inhibitor acarbose. Phosphorylation of acarbose could be a resistance-like self-protection mechanism. This is Acarbose 7(IV)-phosphotransferase from Actinoplanes sp. (strain ATCC 31044 / CBS 674.73 / SE50/110).